Reading from the N-terminus, the 611-residue chain is Elongation factor 4 1 (611 aa).

The region spanning 11–193 is the tr-type G domain; the sequence is QHIRNFSIVA…QIVHKIPAPQ (183 aa). GTP contacts are provided by residues 23–28 and 140–143; these read DHGKST and NKID.

The protein belongs to the TRAFAC class translation factor GTPase superfamily. Classic translation factor GTPase family. LepA subfamily.

The protein resides in the cell membrane. The enzyme catalyses GTP + H2O = GDP + phosphate + H(+). Functionally, required for accurate and efficient protein synthesis under certain stress conditions. May act as a fidelity factor of the translation reaction, by catalyzing a one-codon backward translocation of tRNAs on improperly translocated ribosomes. Back-translocation proceeds from a post-translocation (POST) complex to a pre-translocation (PRE) complex, thus giving elongation factor G a second chance to translocate the tRNAs correctly. Binds to ribosomes in a GTP-dependent manner. This chain is Elongation factor 4 1, found in Lactiplantibacillus plantarum (strain ATCC BAA-793 / NCIMB 8826 / WCFS1) (Lactobacillus plantarum).